The following is a 177-amino-acid chain: Protein GrpE (177 aa).

A disordered region spans residues 1-26 (MSEEIKKDDLQEEVEATETEETVEEV). The segment covering 10–26 (LQEEVEATETEETVEEV) has biased composition (acidic residues).

This sequence belongs to the GrpE family. Homodimer.

It is found in the cytoplasm. Participates actively in the response to hyperosmotic and heat shock by preventing the aggregation of stress-denatured proteins, in association with DnaK and GrpE. It is the nucleotide exchange factor for DnaK and may function as a thermosensor. Unfolded proteins bind initially to DnaJ; upon interaction with the DnaJ-bound protein, DnaK hydrolyzes its bound ATP, resulting in the formation of a stable complex. GrpE releases ADP from DnaK; ATP binding to DnaK triggers the release of the substrate protein, thus completing the reaction cycle. Several rounds of ATP-dependent interactions between DnaJ, DnaK and GrpE are required for fully efficient folding. The chain is Protein GrpE from Streptococcus agalactiae serotype Ia (strain ATCC 27591 / A909 / CDC SS700).